The chain runs to 583 residues: MFMTQIVFGIAPTLLKTFSHLTALDLWRPSAPYVFDPVTSSTYLGTIADGVEEFLGIFYGQDTGGSNRFAPPKPYIPSRHSFINASTAGAACPQPYVPLPADPYTVLTNVSEDCLSLRIARPENTKSTAKLPVMVWLYGGGASVGTAYDVSYNPVGLIQQSVVNGSPVIYVAINYRVNLFGHAFSDALLKSKSTNLAMQDQRLGIEWIKNHISAFGGDPDNITLFGEDEGATYIALHILSNHEVPFHRAILQSGAAITHHDVNGNRSARNFAAVAARCNCLSDGDRQVDSQDTVDCLRRVPMEDLVNATFEVAHSVDPVNGFRAFMPAVDGYMIPDEPSNLLSRGQVPANISILAGWTRDESSMSVPTSIRTAADAASFISTQFPLLNASTIHHFLTSLYPESDFTTNSPSSPEKVTPAWRATSALHRDLTLTCPTIFQAWSLRLSSNCTTPVYLYELRQSPFATALNNSGVGYLGIVHFSDVPYVFNELERTYYITDPEENKLAQRMSASWTAFASGAFPLCERSERSLGRWEEAYGGDRVCRDRMPEHVRVKGIGDNGDQDDGDEIGKLMARCGFINRLEY.

An N-terminal signal peptide occupies residues 1 to 23 (MFMTQIVFGIAPTLLKTFSHLTA). Asn-84, Asn-109, Asn-221, Asn-265, Asn-307, Asn-350, Asn-388, Asn-448, and Asn-468 each carry an N-linked (GlcNAc...) asparagine glycan.

Belongs to the type-B carboxylesterase/lipase family.

Its pathway is secondary metabolite biosynthesis. Its function is as follows. Inactive carboxylesterase-like protein; part of the gene cluster that mediates the biosynthesis of viriditoxin, one of the 'classical' secondary metabolites produced by fungi and that has antibacterial activity. The first step is performed by the polyketide synthase VdtA which condenses one acetyl-CoA and 6 malonyl-CoA units to form the heptaketide monomer backbone of viriditoxin. The product of VdtA is then O-methylated on C7 by the O-methyltransferase VdtC. The O-methyl group is important for the stereoselective coupling of the monomers at the final step of viriditoxin biosynthesis. The short-chain dehydrogenase/reductase VdtF then acts as a stereospecific reductase converting the pyrone to dihydropyrone via the reduction of the C3-C4 double bond. The FAD-binding monooxygenase VdtE then converts the ketone group into a methyl-ester group to yield semi-viriditoxin. Finally, the laccase VdtB is involved in dimerization of 2 semi-viriditoxin molecules to yield the final viriditoxin. VdtB is responsible for the regioselective 6,6'-coupling of semi-viriditoxin, which yields (M)-viriditoxin and (P)-viriditoxin at a ratio of 1:2. The non-catalytic carboxylesterase-like protein VdtD affects the stereochemistical outcome of the coupling. The highly reducing polyketide synthase VdtX is not involved in viriditoxin synthesis, but might possibly play a role in the production of additional metabolites not identified yet. The sequence is that of Inactive carboxylesterase-like protein VdtD from Byssochlamys spectabilis (Paecilomyces variotii).